Reading from the N-terminus, the 311-residue chain is Nod factor export ATP-binding protein I (311 aa).

An ABC transporter domain is found at 13 to 243 (IDLAGVSKSY…QIGCPVIEIY (231 aa)). 45–52 (GPNGAGKS) lines the ATP pocket.

Belongs to the ABC transporter superfamily. Lipooligosaccharide exporter (TC 3.A.1.102) family. In terms of assembly, the complex is composed of two ATP-binding proteins (NodI) and two transmembrane proteins (NodJ).

Its subcellular location is the cell inner membrane. Its function is as follows. Part of the ABC transporter complex NodIJ involved in the export of the nodulation factors (Nod factors), the bacterial signal molecules that induce symbiosis and subsequent nodulation induction. Nod factors are LCO (lipo-chitin oligosaccharide), a modified beta-1,4-linked N-acetylglucosamine oligosaccharide. This subunit is responsible for energy coupling to the transport system. The chain is Nod factor export ATP-binding protein I from Rhizobium johnstonii (strain DSM 114642 / LMG 32736 / 3841) (Rhizobium leguminosarum bv. viciae).